The following is a 1464-amino-acid chain: Gag-Pol polyprotein (1464 aa).

The N-myristoyl glycine; by host moiety is linked to residue G2. An interaction with Gp41 region spans residues 7-31 (VLRGKKADELERIRLRPGGKKKYRL). A Nuclear export signal motif is present at residues 16–22 (LERIRLR). The Nuclear localization signal signature appears at 26–32 (KKKYRLK). Positions 111 to 136 (ETGTAEKMPSTSRPTAPSSEKGGNYP) are disordered. Over residues 119–128 (PSTSRPTAPS) the composition is skewed to polar residues. Y135 carries the phosphotyrosine; by host modification. The interval 191–228 (NCVGDHQAAMQIIREIINEEAAEWDVQHPIPGPLPAGQ) is interaction with human PPIA/CYPA and NUP153. Positions 279–365 (YNPTNILDIK…GGPGQKARLM (87 aa)) are dimerization/Multimerization of capsid protein p24. CCHC-type zinc fingers lie at residues 389–406 (FKCW…QCRA) and 410–427 (QGCW…NCPD). The disordered stretch occupies residues 432 to 500 (FLRTGPLGKE…RGLTAPRAGG (69 aa)). Low complexity predominate over residues 456-469 (TNSTPSGSSSGSTG). Basic and acidic residues predominate over residues 473–485 (AAREKTERAERET). The interval 514 to 518 (PQFSL) is dimerization of protease. The Peptidase A2 domain occupies 533–602 (VEVLLDTGAD…TPINIFGRNI (70 aa)). The For protease activity; shared with dimeric partner role is filled by D538. 2 dimerization of protease regions span residues 562-568 (GIGGFIN) and 601-613 (NILT…LNLP). Residues 656 to 846 (EGQLEEAPPT…PPYHWMGYEL (191 aa)) form the Reverse transcriptase domain. The Mg(2+) site is built by D722, D797, and D798. An RT 'primer grip' region spans residues 839–847 (YHWMGYELW). The short motif at 1009–1025 (WEQWWDNYWQVTWIPDW) is the Tryptophan repeat motif element. One can recognise an RNase H type-1 domain in the interval 1045 to 1168 (IPGAETFYTD…VDHLVSQGIR (124 aa)). D1054, E1089, D1109, and D1160 together coordinate Mg(2+). The segment at 1174-1215 (EKIEPAQEEHEKYHSNVKELSHKFGIPNLVARQIVNSCAQCQ) adopts an Integrase-type zinc-finger fold. Zn(2+)-binding residues include H1183, H1187, C1211, and C1214. Positions 1224-1375 (QVNAELGTWQ…TPSERLINMI (152 aa)) constitute an Integrase catalytic domain. Positions 1235, 1287, and 1323 each coordinate Mg(2+). The integrase-type DNA-binding region spans 1394–1441 (FRVYFREGRDQLWKGPGELLWKGEGAVLVKVGTDIKIIPRRKAKIIRD).

In terms of assembly, homotrimer; further assembles as hexamers of trimers. Interacts with gp41 (via C-terminus). Interacts with host CALM1; this interaction induces a conformational change in the Matrix protein, triggering exposure of the myristate group. Interacts with host AP3D1; this interaction allows the polyprotein trafficking to multivesicular bodies during virus assembly. Part of the pre-integration complex (PIC) which is composed of viral genome, matrix protein, Vpr and integrase. As to quaternary structure, homodimer; the homodimer further multimerizes as homohexamers or homopentamers. Interacts with human PPIA/CYPA. Interacts with human NUP153. Interacts with host PDZD8; this interaction stabilizes the capsid. Interacts with monkey TRIM5; this interaction destabilizes the capsid. Homodimer, whose active site consists of two apposed aspartic acid residues. In terms of assembly, heterodimer of p66 RT and p51 RT (RT p66/p51). Heterodimerization of RT is essential for DNA polymerase activity. The overall folding of the subdomains is similar in p66 RT and p51 RT but the spatial arrangements of the subdomains are dramatically different. As to quaternary structure, homotetramer; may further associate as a homohexadecamer. Part of the pre-integration complex (PIC) which is composed of viral genome, matrix protein, Vpr and integrase. Interacts with human SMARCB1/INI1 and human PSIP1/LEDGF isoform 1. Interacts with human KPNA3; this interaction might play a role in nuclear import of the pre-integration complex. Interacts with human NUP153; this interaction might play a role in nuclear import of the pre-integration complex. The cofactor is Mg(2+). Specific enzymatic cleavages by the viral protease yield mature proteins. The protease is released by autocatalytic cleavage. The polyprotein is cleaved during and after budding, this process is termed maturation. Proteolytic cleavage of p66 RT removes the RNase H domain to yield the p51 RT subunit. Nucleocapsid protein p7 might be further cleaved after virus entry.

The protein localises to the host cell membrane. The protein resides in the host endosome. It localises to the host multivesicular body. Its subcellular location is the virion membrane. It is found in the host nucleus. The protein localises to the host cytoplasm. The protein resides in the virion. The enzyme catalyses Endopeptidase for which the P1 residue is preferably hydrophobic.. It catalyses the reaction Endohydrolysis of RNA in RNA/DNA hybrids. Three different cleavage modes: 1. sequence-specific internal cleavage of RNA. Human immunodeficiency virus type 1 and Moloney murine leukemia virus enzymes prefer to cleave the RNA strand one nucleotide away from the RNA-DNA junction. 2. RNA 5'-end directed cleavage 13-19 nucleotides from the RNA end. 3. DNA 3'-end directed cleavage 15-20 nucleotides away from the primer terminus.. The catalysed reaction is 3'-end directed exonucleolytic cleavage of viral RNA-DNA hybrid.. It carries out the reaction DNA(n) + a 2'-deoxyribonucleoside 5'-triphosphate = DNA(n+1) + diphosphate. Its activity is regulated as follows. Protease: The viral protease is inhibited by many synthetic protease inhibitors (PIs), such as amprenavir, atazanavir, indinavir, loprinavir, nelfinavir, ritonavir and saquinavir. Use of protease inhibitors in tritherapy regimens permit more ambitious therapeutic strategies. Reverse transcriptase/ribonuclease H: RT can be inhibited either by nucleoside RT inhibitors (NRTIs) or by non nucleoside RT inhibitors (NNRTIs). NRTIs act as chain terminators, whereas NNRTIs inhibit DNA polymerization by binding a small hydrophobic pocket near the RT active site and inducing an allosteric change in this region. Classical NRTIs are abacavir, adefovir (PMEA), didanosine (ddI), lamivudine (3TC), stavudine (d4T), tenofovir (PMPA), zalcitabine (ddC), and zidovudine (AZT). Classical NNRTIs are atevirdine (BHAP U-87201E), delavirdine, efavirenz (DMP-266), emivirine (I-EBU), and nevirapine (BI-RG-587). The tritherapies used as a basic effective treatment of AIDS associate two NRTIs and one NNRTI. Mediates, with Gag polyprotein, the essential events in virion assembly, including binding the plasma membrane, making the protein-protein interactions necessary to create spherical particles, recruiting the viral Env proteins, and packaging the genomic RNA via direct interactions with the RNA packaging sequence (Psi). Gag-Pol polyprotein may regulate its own translation, by the binding genomic RNA in the 5'-UTR. At low concentration, the polyprotein would promote translation, whereas at high concentration, the polyprotein would encapsidate genomic RNA and then shut off translation. Functionally, targets the polyprotein to the plasma membrane via a multipartite membrane-binding signal, that includes its myristoylated N-terminus. Matrix protein is part of the pre-integration complex. Implicated in the release from host cell mediated by Vpu. Binds to RNA. In terms of biological role, forms the conical core that encapsulates the genomic RNA-nucleocapsid complex in the virion. Most core are conical, with only 7% tubular. The core is constituted by capsid protein hexamer subunits. The core is disassembled soon after virion entry. Host restriction factors such as TRIM5-alpha or TRIMCyp bind retroviral capsids and cause premature capsid disassembly, leading to blocks in reverse transcription. Capsid restriction by TRIM5 is one of the factors which restricts HIV-1 to the human species. Host PIN1 apparently facilitates the virion uncoating. On the other hand, interactions with PDZD8 or CYPA stabilize the capsid. Its function is as follows. Encapsulates and protects viral dimeric unspliced genomic RNA (gRNA). Binds these RNAs through its zinc fingers. Acts as a nucleic acid chaperone which is involved in rearangement of nucleic acid secondary structure during gRNA retrotranscription. Also facilitates template switch leading to recombination. As part of the polyprotein, participates in gRNA dimerization, packaging, tRNA incorporation and virion assembly. Aspartyl protease that mediates proteolytic cleavages of Gag and Gag-Pol polyproteins during or shortly after the release of the virion from the plasma membrane. Cleavages take place as an ordered, step-wise cascade to yield mature proteins. This process is called maturation. Displays maximal activity during the budding process just prior to particle release from the cell. Also cleaves Nef and Vif, probably concomitantly with viral structural proteins on maturation of virus particles. Hydrolyzes host EIF4GI and PABP1 in order to shut off the capped cellular mRNA translation. The resulting inhibition of cellular protein synthesis serves to ensure maximal viral gene expression and to evade host immune response. Functionally, multifunctional enzyme that converts the viral RNA genome into dsDNA in the cytoplasm, shortly after virus entry into the cell. This enzyme displays a DNA polymerase activity that can copy either DNA or RNA templates, and a ribonuclease H (RNase H) activity that cleaves the RNA strand of RNA-DNA heteroduplexes in a partially processive 3' to 5' endonucleasic mode. Conversion of viral genomic RNA into dsDNA requires many steps. A tRNA(3)-Lys binds to the primer-binding site (PBS) situated at the 5'-end of the viral RNA. RT uses the 3' end of the tRNA primer to perform a short round of RNA-dependent minus-strand DNA synthesis. The reading proceeds through the U5 region and ends after the repeated (R) region which is present at both ends of viral RNA. The portion of the RNA-DNA heteroduplex is digested by the RNase H, resulting in a ssDNA product attached to the tRNA primer. This ssDNA/tRNA hybridizes with the identical R region situated at the 3' end of viral RNA. This template exchange, known as minus-strand DNA strong stop transfer, can be either intra- or intermolecular. RT uses the 3' end of this newly synthesized short ssDNA to perform the RNA-dependent minus-strand DNA synthesis of the whole template. RNase H digests the RNA template except for two polypurine tracts (PPTs) situated at the 5'-end and near the center of the genome. It is not clear if both polymerase and RNase H activities are simultaneous. RNase H probably can proceed both in a polymerase-dependent (RNA cut into small fragments by the same RT performing DNA synthesis) and a polymerase-independent mode (cleavage of remaining RNA fragments by free RTs). Secondly, RT performs DNA-directed plus-strand DNA synthesis using the PPTs that have not been removed by RNase H as primers. PPTs and tRNA primers are then removed by RNase H. The 3' and 5' ssDNA PBS regions hybridize to form a circular dsDNA intermediate. Strand displacement synthesis by RT to the PBS and PPT ends produces a blunt ended, linear dsDNA copy of the viral genome that includes long terminal repeats (LTRs) at both ends. In terms of biological role, catalyzes viral DNA integration into the host chromosome, by performing a series of DNA cutting and joining reactions. This enzyme activity takes place after virion entry into a cell and reverse transcription of the RNA genome in dsDNA. The first step in the integration process is 3' processing. This step requires a complex comprising the viral genome, matrix protein, Vpr and integrase. This complex is called the pre-integration complex (PIC). The integrase protein removes 2 nucleotides from each 3' end of the viral DNA, leaving recessed CA OH's at the 3' ends. In the second step, the PIC enters cell nucleus. This process is mediated through integrase and Vpr proteins, and allows the virus to infect a non dividing cell. This ability to enter the nucleus is specific of lentiviruses, other retroviruses cannot and rely on cell division to access cell chromosomes. In the third step, termed strand transfer, the integrase protein joins the previously processed 3' ends to the 5' ends of strands of target cellular DNA at the site of integration. The 5'-ends are produced by integrase-catalyzed staggered cuts, 5 bp apart. A Y-shaped, gapped, recombination intermediate results, with the 5'-ends of the viral DNA strands and the 3' ends of target DNA strands remaining unjoined, flanking a gap of 5 bp. The last step is viral DNA integration into host chromosome. This involves host DNA repair synthesis in which the 5 bp gaps between the unjoined strands are filled in and then ligated. Since this process occurs at both cuts flanking the HIV genome, a 5 bp duplication of host DNA is produced at the ends of HIV-1 integration. Alternatively, Integrase may catalyze the excision of viral DNA just after strand transfer, this is termed disintegration. The sequence is that of Gag-Pol polyprotein (gag-pol) from Homo sapiens (Human).